A 212-amino-acid polypeptide reads, in one-letter code: Orotate phosphoribosyltransferase (212 aa).

Lys26 provides a ligand contact to 5-phospho-alpha-D-ribose 1-diphosphate. Position 34 to 35 (34 to 35 (FF)) interacts with orotate. 5-phospho-alpha-D-ribose 1-diphosphate contacts are provided by residues 72-73 (YK), Arg99, Lys100, Lys103, His105, and 124-132 (DDVITVGTA). Thr128 and Arg156 together coordinate orotate.

The protein belongs to the purine/pyrimidine phosphoribosyltransferase family. PyrE subfamily. In terms of assembly, homodimer. Requires Mg(2+) as cofactor.

The catalysed reaction is orotidine 5'-phosphate + diphosphate = orotate + 5-phospho-alpha-D-ribose 1-diphosphate. Its pathway is pyrimidine metabolism; UMP biosynthesis via de novo pathway; UMP from orotate: step 1/2. Functionally, catalyzes the transfer of a ribosyl phosphate group from 5-phosphoribose 1-diphosphate to orotate, leading to the formation of orotidine monophosphate (OMP). The polypeptide is Orotate phosphoribosyltransferase (Ruthia magnifica subsp. Calyptogena magnifica).